The primary structure comprises 168 residues: Photosystem I assembly protein Ycf3 (168 aa).

TPR repeat units lie at residues 35–68 (AFTY…EIDP), 72–105 (SYIL…NPFL), and 120–153 (GEQA…TPGN).

It belongs to the Ycf3 family. Interacts with Y3IP1.

The protein resides in the plastid. The protein localises to the chloroplast thylakoid membrane. Essential for the assembly of the photosystem I (PSI) complex. May act as a chaperone-like factor to guide the assembly of the PSI subunits. This is Photosystem I assembly protein Ycf3 from Arabidopsis thaliana (Mouse-ear cress).